We begin with the raw amino-acid sequence, 533 residues long: Subtilisin-like protease 1 (533 aa).

The N-terminal stretch at 1-19 (MGVFRFISISLAAVSAANA) is a signal peptide. A propeptide spanning residues 20-116 (AQILSMPHAQ…VEPDTIISVH (97 aa)) is cleaved from the precursor. The region spanning 34–115 (SYIVMMKDDT…FVEPDTIISV (82 aa)) is the Inhibitor I9 domain. In terms of domain architecture, Peptidase S8 spans 126-400 (SWGLARISNP…NVLINNGGAK (275 aa)). Active-site charge relay system residues include D158 and H190. The disordered stretch occupies residues 175 to 198 (GSNQVNDGDDRDGSGHGTHTSGTM). N233 and N251 each carry an N-linked (GlcNAc...) asparagine glycan. Residues 282 to 294 (NDNQDAQSSSPAS) are compositionally biased toward polar residues. The segment at 282–312 (NDNQDAQSSSPASEPSVCTVGSSAEDDSRSS) is disordered. The active-site Charge relay system is S345. A compositionally biased stretch (polar residues) spans 378–394 (TSSITDAGPGTPTNVLI). A disordered region spans residues 378 to 512 (TSSITDAGPG…YPGGDNFDFD (135 aa)). The segment covering 405–470 (NPNPAPSPSP…FPGEPFPGEP (66 aa)) has biased composition (pro residues). A compositionally biased stretch (low complexity) spans 471 to 487 (FPGESFPGESFPGESAP). Over residues 488–502 (APAPMPPSPQHPHTP) the composition is skewed to pro residues.

This sequence belongs to the peptidase S8 family.

Its subcellular location is the secreted. Secreted subtilisin-like serine protease with keratinolytic activity that contributes to pathogenicity. This chain is Subtilisin-like protease 1 (SUB1), found in Arthroderma benhamiae (strain ATCC MYA-4681 / CBS 112371) (Trichophyton mentagrophytes).